A 139-amino-acid chain; its full sequence is Putative pre-16S rRNA nuclease (139 aa).

The protein belongs to the YqgF nuclease family.

The protein localises to the cytoplasm. Functionally, could be a nuclease involved in processing of the 5'-end of pre-16S rRNA. The sequence is that of Putative pre-16S rRNA nuclease from Streptococcus gordonii (strain Challis / ATCC 35105 / BCRC 15272 / CH1 / DL1 / V288).